We begin with the raw amino-acid sequence, 55 residues long: Large ribosomal subunit protein bL33 (55 aa).

Belongs to the bacterial ribosomal protein bL33 family.

This chain is Large ribosomal subunit protein bL33, found in Hamiltonella defensa subsp. Acyrthosiphon pisum (strain 5AT).